The following is a 248-amino-acid chain: 4-hydroxy-tetrahydrodipicolinate reductase (248 aa).

Residues 74–76 (GTT) and 99–102 (SANF) contribute to the NAD(+) site. The active-site Proton donor/acceptor is His-134. His-135 provides a ligand contact to (S)-2,3,4,5-tetrahydrodipicolinate. Lys-138 acts as the Proton donor in catalysis. 144–145 (GT) lines the (S)-2,3,4,5-tetrahydrodipicolinate pocket.

The protein belongs to the DapB family.

Its subcellular location is the cytoplasm. It catalyses the reaction (S)-2,3,4,5-tetrahydrodipicolinate + NAD(+) + H2O = (2S,4S)-4-hydroxy-2,3,4,5-tetrahydrodipicolinate + NADH + H(+). The enzyme catalyses (S)-2,3,4,5-tetrahydrodipicolinate + NADP(+) + H2O = (2S,4S)-4-hydroxy-2,3,4,5-tetrahydrodipicolinate + NADPH + H(+). The protein operates within amino-acid biosynthesis; L-lysine biosynthesis via DAP pathway; (S)-tetrahydrodipicolinate from L-aspartate: step 4/4. Catalyzes the conversion of 4-hydroxy-tetrahydrodipicolinate (HTPA) to tetrahydrodipicolinate. This is 4-hydroxy-tetrahydrodipicolinate reductase from Chlorobium phaeobacteroides (strain DSM 266 / SMG 266 / 2430).